We begin with the raw amino-acid sequence, 411 residues long: Squalene synthase (411 aa).

The next 2 helical transmembrane spans lie at 281 to 301 (SIFR…AMCY) and 388 to 408 (SPVL…QLSG).

The protein belongs to the phytoene/squalene synthase family. Mg(2+) is required as a cofactor.

It is found in the endoplasmic reticulum membrane. The catalysed reaction is 2 (2E,6E)-farnesyl diphosphate + NADPH + H(+) = squalene + 2 diphosphate + NADP(+). It catalyses the reaction 2 (2E,6E)-farnesyl diphosphate + NADH + H(+) = squalene + 2 diphosphate + NAD(+). Its pathway is terpene metabolism; lanosterol biosynthesis; lanosterol from farnesyl diphosphate: step 1/3. The sequence is that of Squalene synthase from Nicotiana benthamiana.